We begin with the raw amino-acid sequence, 411 residues long: Putative binding protein BRA0748/BS1330_II0741 (411 aa).

The signal sequence occupies residues 1 to 25 (MLIRKWKAGLLAGLSILALASSADA).

It belongs to the bacterial solute-binding protein 1 family. In terms of assembly, the complex is composed of two ATP-binding proteins (BRA0745), two transmembrane proteins (BRA0749) and a solute-binding protein (BRA0748).

It is found in the periplasm. Probably part of an ABC transporter complex. This chain is Putative binding protein BRA0748/BS1330_II0741, found in Brucella suis biovar 1 (strain 1330).